We begin with the raw amino-acid sequence, 219 residues long: Cytidylate kinase (219 aa).

Residue Gly-21–Thr-29 coordinates ATP.

Belongs to the cytidylate kinase family. Type 1 subfamily.

It localises to the cytoplasm. The catalysed reaction is CMP + ATP = CDP + ADP. It catalyses the reaction dCMP + ATP = dCDP + ADP. This chain is Cytidylate kinase, found in Rickettsia akari (strain Hartford).